The sequence spans 265 residues: 4-hydroxy-tetrahydrodipicolinate reductase (265 aa).

9–14 contacts NAD(+); that stretch reads GPRGRM. Arginine 37 provides a ligand contact to NADP(+). NAD(+) is bound by residues 98 to 100 and 124 to 127; these read GTT and APNF. Residue histidine 154 is the Proton donor/acceptor of the active site. Histidine 155 provides a ligand contact to (S)-2,3,4,5-tetrahydrodipicolinate. Lysine 158 functions as the Proton donor in the catalytic mechanism. A (S)-2,3,4,5-tetrahydrodipicolinate-binding site is contributed by 164-165; that stretch reads GT.

It belongs to the DapB family.

It is found in the cytoplasm. It catalyses the reaction (S)-2,3,4,5-tetrahydrodipicolinate + NAD(+) + H2O = (2S,4S)-4-hydroxy-2,3,4,5-tetrahydrodipicolinate + NADH + H(+). The catalysed reaction is (S)-2,3,4,5-tetrahydrodipicolinate + NADP(+) + H2O = (2S,4S)-4-hydroxy-2,3,4,5-tetrahydrodipicolinate + NADPH + H(+). Its pathway is amino-acid biosynthesis; L-lysine biosynthesis via DAP pathway; (S)-tetrahydrodipicolinate from L-aspartate: step 4/4. In terms of biological role, catalyzes the conversion of 4-hydroxy-tetrahydrodipicolinate (HTPA) to tetrahydrodipicolinate. This Geobacillus kaustophilus (strain HTA426) protein is 4-hydroxy-tetrahydrodipicolinate reductase.